We begin with the raw amino-acid sequence, 214 residues long: Putative nickel/cobalt efflux system MJ1092 (214 aa).

6 helical membrane-spanning segments follow: residues 2 to 22, 46 to 66, 79 to 99, 116 to 136, 149 to 169, and 188 to 208; these read VMIM…LHAL, ILLG…LGIL, VHDM…IWII, VITL…AVLL, IYVA…AVAF, and LPLI…AHPI.

Belongs to the NiCoT transporter (TC 2.A.52) family.

It is found in the cell membrane. In terms of biological role, efflux system for nickel and cobalt. This is Putative nickel/cobalt efflux system MJ1092 from Methanocaldococcus jannaschii (strain ATCC 43067 / DSM 2661 / JAL-1 / JCM 10045 / NBRC 100440) (Methanococcus jannaschii).